The primary structure comprises 135 residues: Calcium-binding protein KIC (135 aa).

The region spanning 74 to 109 (MSKEDAQGMVREGDLDGDGALNQTEFCVLMVRLSPE) is the EF-hand domain. Ca(2+)-binding residues include Asp-87, Asp-89, Asp-91, and Glu-98.

Interacts with KCBP (via C-terminus). KIC and calmodulin show competitive binding to KCBP. Interacts with CML42. Binds to ABCG36. As to expression, expressed in stems, leaves and flowers.

Its function is as follows. Calcium-binding regulatory protein that interacts with kinesin motor protein KCBP in a calcium-dependent manner. Inhibits KCBP microtubule binding activity and microtubule-stimulated ATPase activity. Involved in the regulation of trichome branching through its interaction with KCBP. The protein is Calcium-binding protein KIC of Arabidopsis thaliana (Mouse-ear cress).